Consider the following 146-residue polypeptide: Acireductone dioxygenase (146 aa).

Positions 71, 73, 77, and 116 each coordinate Fe(2+). Ni(2+)-binding residues include His-71, His-73, Glu-77, and His-116.

It belongs to the acireductone dioxygenase (ARD) family. It depends on Fe(2+) as a cofactor. The cofactor is Ni(2+).

It is found in the cytoplasm. The protein localises to the nucleus. It catalyses the reaction 1,2-dihydroxy-5-(methylsulfanyl)pent-1-en-3-one + O2 = 4-methylsulfanyl-2-oxobutanoate + formate + 2 H(+). The catalysed reaction is 1,2-dihydroxy-5-(methylsulfanyl)pent-1-en-3-one + O2 = 3-(methylsulfanyl)propanoate + CO + formate + 2 H(+). The protein operates within amino-acid biosynthesis; L-methionine biosynthesis via salvage pathway; L-methionine from S-methyl-5-thio-alpha-D-ribose 1-phosphate: step 5/6. Its function is as follows. Catalyzes 2 different reactions between oxygen and the acireductone 1,2-dihydroxy-3-keto-5-methylthiopentene (DHK-MTPene) depending upon the metal bound in the active site. Fe-containing acireductone dioxygenase (Fe-ARD) produces formate and 2-keto-4-methylthiobutyrate (KMTB), the alpha-ketoacid precursor of methionine in the methionine recycle pathway. Ni-containing acireductone dioxygenase (Ni-ARD) produces methylthiopropionate, carbon monoxide and formate, and does not lie on the methionine recycle pathway. The chain is Acireductone dioxygenase from Heterostelium pallidum (strain ATCC 26659 / Pp 5 / PN500) (Cellular slime mold).